The chain runs to 146 residues: Keratin-associated protein 4-1 (146 aa).

18 consecutive repeat copies span residues 5–9 (CCGSV), 24–28 (CCRPS), 29–33 (CCQTT), 34–38 (CCCPS), 44–48 (CCRPS), 54–58 (CCQTT), 59–63 (CCRPS), 64–68 (CCHPV), 69–73 (CCQTT), 83–87 (CCRPL), 88–92 (CCQTT), 102–106 (CCRPL), 107–111 (CCQTT), 121–125 (CCRPL), 126–130 (CCQTT), 131–135 (CCRAT), 136–140 (CCRPS), and 141–145 (CCGSS). Positions 5–145 (CCGSVCSDQG…CCRPSCCGSS (141 aa)) are 18 X 5 AA repeats of C-C-[GRQC]-[SPT]-[VSTL].

Belongs to the KRTAP type 4 family. In terms of assembly, interacts with hair keratins. Expressed in the hair follicles.

Functionally, in the hair cortex, hair keratin intermediate filaments are embedded in an interfilamentous matrix, consisting of hair keratin-associated proteins (KRTAP), which are essential for the formation of a rigid and resistant hair shaft through their extensive disulfide bond cross-linking with abundant cysteine residues of hair keratins. The matrix proteins include the high-sulfur and high-glycine-tyrosine keratins. This Homo sapiens (Human) protein is Keratin-associated protein 4-1 (KRTAP4-1).